A 285-amino-acid polypeptide reads, in one-letter code: MFDKARLPYVALDVLCVVLAGLPFAILTSRHTPFQRGIFCNDESIKYPYKEDTIPYALLGGIMIPFSIVVMIIGETLSVYCNLLHSNSFIRNNYIATIYKSIGTFLFGAAASQSLTDIAKYSIGRLRPHFLSVCDPDWSKVNCSDGYIEYYVCRGNAEKVKEGRLSFYSGHSSFSMYCMVFVALYLQARMKGDWARLLRPTLQFGLVAASIYVGLSRISDYKHHWSDVLTGLIQGAIVAILVAVYVSDFFKARNSPFQERKEEDSHTTLHETPTAGNHYRSNHQP.

At 1 to 6 the chain is on the cytoplasmic side; that stretch reads MFDKAR. The PDZ-binding; involved in localization to the apical cell membrane signature appears at 5 to 7; sequence ARL. The helical transmembrane segment at 7–27 threads the bilayer; the sequence is LPYVALDVLCVVLAGLPFAIL. Over 28–53 the chain is Extracellular; that stretch reads TSRHTPFQRGIFCNDESIKYPYKEDT. The helical transmembrane segment at 54-74 threads the bilayer; it reads IPYALLGGIMIPFSIVVMIIG. Topologically, residues 75 to 94 are cytoplasmic; that stretch reads ETLSVYCNLLHSNSFIRNNY. A helical transmembrane segment spans residues 95–115; sequence IATIYKSIGTFLFGAAASQSL. Residues 116-165 are Extracellular-facing; it reads TDIAKYSIGRLRPHFLSVCDPDWSKVNCSDGYIEYYVCRGNAEKVKEGRL. Residues 120-128 are phosphatase sequence motif I; that stretch reads KYSIGRLRP. N142 carries N-linked (GlcNAc...) asparagine glycosylation. A helical transmembrane segment spans residues 166 to 186; it reads SFYSGHSSFSMYCMVFVALYL. The segment at 168 to 171 is phosphatase sequence motif II; it reads YSGH. The active-site Proton donors is H171. The Cytoplasmic segment spans residues 187–199; sequence QARMKGDWARLLR. Residues 200–220 form a helical membrane-spanning segment; it reads PTLQFGLVAASIYVGLSRISD. The phosphatase sequence motif III stretch occupies residues 216–227; the sequence is SRISDYKHHWSD. Over 221–229 the chain is Extracellular; it reads YKHHWSDVL. The Nucleophile role is filled by H223. The chain crosses the membrane as a helical span at residues 230-250; the sequence is TGLIQGAIVAILVAVYVSDFF. Residues 251–285 are Cytoplasmic-facing; the sequence is KARNSPFQERKEEDSHTTLHETPTAGNHYRSNHQP. The segment covering 260–269 has biased composition (basic and acidic residues); it reads RKEEDSHTTL. A disordered region spans residues 260–285; that stretch reads RKEEDSHTTLHETPTAGNHYRSNHQP.

It belongs to the PA-phosphatase related phosphoesterase family. As to quaternary structure, forms functional homodimers and homooligomers that are not required for substrate recognition and catalytic activity. Can also form heterooligomers with PLPP2 and PLPP3. In terms of processing, N-glycosylated. N-linked sugars are of the complex type. N-glycosylation is not required for the phosphatase activity.

The protein resides in the cell membrane. It localises to the apical cell membrane. The protein localises to the membrane raft. It is found in the membrane. Its subcellular location is the caveola. The catalysed reaction is a 1,2-diacyl-sn-glycero-3-phosphate + H2O = a 1,2-diacyl-sn-glycerol + phosphate. The enzyme catalyses 1,2-dihexadecanoyl-sn-glycero-3-phosphate + H2O = 1,2-dihexadecanoyl-sn-glycerol + phosphate. It carries out the reaction 1,2-di-(9Z-octadecenoyl)-sn-glycero-3-phosphate + H2O = 1,2-di-(9Z-octadecenoyl)-sn-glycerol + phosphate. It catalyses the reaction a monoacyl-sn-glycero-3-phosphate + H2O = a monoacylglycerol + phosphate. The catalysed reaction is (9Z)-octadecenoyl-sn-glycero-3-phosphate + H2O = (9Z-octadecenoyl)-glycerol + phosphate. The enzyme catalyses a 1-acyl-sn-glycero-3-phosphate + H2O = a 1-acyl-sn-glycerol + phosphate. It carries out the reaction 1-(9Z-octadecenoyl)-sn-glycero-3-phosphate + H2O = 1-(9Z-octadecenoyl)-sn-glycerol + phosphate. It catalyses the reaction a 1,2-diacyl-sn-glycerol 3-diphosphate + H2O = a 1,2-diacyl-sn-glycero-3-phosphate + phosphate + H(+). The catalysed reaction is sphing-4-enine 1-phosphate + H2O = sphing-4-enine + phosphate. The enzyme catalyses an N-acylsphing-4-enine 1-phosphate + H2O = an N-acylsphing-4-enine + phosphate. It carries out the reaction N-(octanoyl)-sphing-4-enine-1-phosphate + H2O = N-octanoylsphing-4-enine + phosphate. It catalyses the reaction N-(9Z-octadecenoyl)-ethanolamine phosphate + H2O = N-(9Z-octadecenoyl) ethanolamine + phosphate. The catalysed reaction is 1-hexadecanoyl-2-(9Z-octadecenoyl)-sn-glycero-3-phosphate + H2O = 1-hexadecanoyl-2-(9Z-octadecenoyl)-sn-glycerol + phosphate. The protein operates within lipid metabolism; phospholipid metabolism. With respect to regulation, magnesium-independent phospholipid phosphatase. Insensitive to N-ethylmaleimide. Its function is as follows. Magnesium-independent phospholipid phosphatase of the plasma membrane that catalyzes the dephosphorylation of a variety of glycerolipid and sphingolipid phosphate esters including phosphatidate/PA, lysophosphatidate/LPA, diacylglycerol pyrophosphate/DGPP, sphingosine 1-phosphate/S1P and ceramide 1-phosphate/C1P. Also acts on N-oleoyl ethanolamine phosphate/N-(9Z-octadecenoyl)-ethanolamine phosphate, a potential physiological compound. Through its extracellular phosphatase activity allows both the hydrolysis and the cellular uptake of these bioactive lipid mediators from the milieu, regulating signal transduction in different cellular processes. It is for instance essential for the extracellular hydrolysis of S1P and subsequent conversion into intracellular S1P. Involved in the regulation of inflammation, platelets activation, cell proliferation and migration among other processes. May also have an intracellular activity to regulate phospholipid-mediated signaling pathways. In Cavia porcellus (Guinea pig), this protein is Phospholipid phosphatase 1.